A 428-amino-acid chain; its full sequence is Ribosome biogenesis protein WDR12 homolog (428 aa).

Positions 13-97 are ubiquitin-like (UBL) domain; that stretch reads LQVHFTTKQK…EDTIELEYVE (85 aa). WD repeat units lie at residues 109–146, 148–190, 197–236, 259–297, 299–338, 344–384, and 388–426; these read LHDDWVSAVQAKDGWILTGTYDNTVNLWNTKGKHKLTI, GHVA…NTAE, GHERGVGCIAVNPAKTQMASGSMDTMLKIWSTELQADKGE, GHREFVSGVQWIDNTTIATCSWDHTIKLWDLSMGGIKTE, TGNKSFFDLSYSPLNGMIITASPDKNLRLYDPRSKHGNFV, GHSQ…APIF, and GHEDKVLACDWSNPKYILSGGSDNAVRVFKSRIAVDNTK.

The protein belongs to the WD repeat WDR12/YTM1 family.

The protein localises to the nucleus. Its subcellular location is the nucleolus. The protein resides in the nucleoplasm. Required for maturation of ribosomal RNAs and formation of the large ribosomal subunit. The sequence is that of Ribosome biogenesis protein WDR12 homolog from Anopheles gambiae (African malaria mosquito).